Here is a 507-residue protein sequence, read N- to C-terminus: Alkyl hydroperoxide reductase subunit F (507 aa).

Residue 207–222 coordinates FAD; the sequence is DVLIVGGGPASGSAAI. Cysteines 335 and 338 form a disulfide. 347–361 provides a ligand contact to NAD(+); it reads DVAVIGGGNSGVEAA. Residue 467–477 participates in FAD binding; it reads TNVPGIFAAGD.

Belongs to the class-II pyridine nucleotide-disulfide oxidoreductase family. Homodimer. FAD serves as cofactor.

Functionally, serves to protect the cell against DNA damage by alkyl hydroperoxides. It can use either NADH or NADPH as electron donor for direct reduction of redox dyes or of alkyl hydroperoxides when combined with the AhpC protein. This chain is Alkyl hydroperoxide reductase subunit F (ahpF), found in Staphylococcus aureus (strain Mu50 / ATCC 700699).